Here is a 201-residue protein sequence, read N- to C-terminus: Dephospho-CoA kinase (201 aa).

Positions 4 to 201 (SVGLTGNIAS…KYLREAKIKQ (198 aa)) constitute a DPCK domain. 12-17 (ASGKST) serves as a coordination point for ATP.

It belongs to the CoaE family.

The protein resides in the cytoplasm. The enzyme catalyses 3'-dephospho-CoA + ATP = ADP + CoA + H(+). It functions in the pathway cofactor biosynthesis; coenzyme A biosynthesis; CoA from (R)-pantothenate: step 5/5. In terms of biological role, catalyzes the phosphorylation of the 3'-hydroxyl group of dephosphocoenzyme A to form coenzyme A. The protein is Dephospho-CoA kinase of Legionella pneumophila (strain Lens).